The sequence spans 206 residues: Protein Nef (206 aa).

The N-myristoyl glycine; by host moiety is linked to residue G2. At S6 the chain carries Phosphoserine; by host. The interval 62–65 (EDED) is acidic; interacts with host PACS1 and PACS2; stabilizes the interaction of NEF/MHC-I with host AP1M1; necessary for MHC-I internalization. Positions 69–78 (PVRPQVPLRP) are SH3-binding; interaction with Src family tyrosine kinases. Positions 72–75 (PQVP) match the PxxP; stabilizes the interaction of NEF/MHC-I with host AP1M1; necessary for MHC-I internalization motif. The mediates dimerization, Nef-PTE1 interaction stretch occupies residues 108 to 124 (EILDLWVYHTQGFFPDW). The segment at 148–180 (VDPREVEEATEGENNCLLHPVNQHGMEDEHREV) is binding to ATP6V1H. The Dileucine internalization motif; necessary for CD4 internalization signature appears at 164 to 165 (LL). The Diacidic; necessary for CD4 internalization signature appears at 174-175 (ED).

This sequence belongs to the lentivirus primate group Nef protein family. In terms of assembly, monomer; cytosolic form. Homodimer; membrane bound form. Interacts with Nef associated p21-activated kinase (PAK2); this interaction activates PAK2. Associates with the Nef-MHC-I-AP1 complex; this complex is required for MHC-I internalization. Interacts (via C-terminus) with host PI3-kinase. Interacts with host PACS1; this interaction seems to be weak. Interacts with host PACS2. Interacts with host LCK and MAPK3; these interactions inhibit the kinase activity of the latter. Interacts with host ATP6V1H; this interaction may play a role in CD4 endocytosis. Associates with the CD4-Nef-AP2 complex; this complex is required for CD4 internalization. Interacts with host AP2 subunit alpha and AP2 subunit sigma2. Interacts with TCR-zeta chain; this interaction up-regulates the Fas ligand (FasL) surface expression. Interacts with host HCK, LYN, and SRC; these interactions activate the Src family kinases. Interacts with MAP3K5; this interaction inhibits the Fas and TNFR-mediated death signals. Interacts with beta-COP and PTE1. Interacts with human RACK1; this increases Nef phosphorylation by PKC. Interacts with TP53; this interaction decreases the half-life of TP53, protecting the infected cell against p53-mediated apoptosis. Post-translationally, the virion-associated Nef proteins are cleaved by the viral protease to release the soluble C-terminal core protein. Nef is probably cleaved concomitantly with viral structural proteins on maturation of virus particles. In terms of processing, myristoylated. Phosphorylated on serine residues, probably by host PKCdelta and theta.

It localises to the host cell membrane. The protein localises to the virion. It is found in the secreted. The protein resides in the host Golgi apparatus membrane. Factor of infectivity and pathogenicity, required for optimal virus replication. Alters numerous pathways of T-lymphocyte function and down-regulates immunity surface molecules in order to evade host defense and increase viral infectivity. Alters the functionality of other immunity cells, like dendritic cells, monocytes/macrophages and NK cells. Functionally, in infected CD4(+) T-lymphocytes, down-regulates the surface MHC-I, mature MHC-II, CD4, CD28, CCR5 and CXCR4 molecules. Mediates internalization and degradation of host CD4 through the interaction of with the cytoplasmic tail of CD4, the recruitment of AP-2 (clathrin adapter protein complex 2), internalization through clathrin coated pits, and subsequent transport to endosomes and lysosomes for degradation. Diverts host MHC-I molecules to the trans-Golgi network-associated endosomal compartments by an endocytic pathway to finally target them for degradation. MHC-I down-regulation may involve AP-1 (clathrin adapter protein complex 1) or possibly Src family kinase-ZAP70/Syk-PI3K cascade recruited by PACS2. In consequence infected cells are masked for immune recognition by cytotoxic T-lymphocytes. Decreasing the number of immune receptors also prevents reinfection by more HIV particles (superinfection). Down-regulates host SERINC3 and SERINC5 thereby excluding these proteins from the viral particles. Virion infectivity is drastically higher when SERINC3 or SERINC5 are excluded from the viral envelope, because these host antiviral proteins impair the membrane fusion event necessary for subsequent virion penetration. Its function is as follows. Bypasses host T-cell signaling by inducing a transcriptional program nearly identical to that of anti-CD3 cell activation. Interaction with TCR-zeta chain up-regulates the Fas ligand (FasL). Increasing surface FasL molecules and decreasing surface MHC-I molecules on infected CD4(+) cells send attacking cytotoxic CD8+ T-lymphocytes into apoptosis. In terms of biological role, plays a role in optimizing the host cell environment for viral replication without causing cell death by apoptosis. Protects the infected cells from apoptosis in order to keep them alive until the next virus generation is ready to strike. Inhibits the Fas and TNFR-mediated death signals by blocking MAP3K5/ASK1. Decreases the half-life of TP53, protecting the infected cell against p53-mediated apoptosis. Inhibits the apoptotic signals regulated by the Bcl-2 family proteins through the formation of a Nef/PI3-kinase/PAK2 complex that leads to activation of PAK2 and induces phosphorylation of host BAD. Extracellular Nef protein targets CD4(+) T-lymphocytes for apoptosis by interacting with CXCR4 surface receptors. In Homo sapiens (Human), this protein is Protein Nef.